The chain runs to 330 residues: Peroxidase 70 (330 aa).

The N-terminal stretch at 1–24 is a signal peptide; the sequence is MRSFTNLNPCYVLLPFFLVLATNA. 4 disulfides stabilise this stretch: C43–C119, C76–C81, C125–C326, and C202–C234. Residue H74 is the Proton acceptor of the active site. Positions 75, 78, 80, 82, and 84 each coordinate Ca(2+). P165 serves as a coordination point for substrate. Residue H195 coordinates heme b. T196 is a binding site for Ca(2+). Residues D247, S250, and D255 each contribute to the Ca(2+) site.

The protein belongs to the peroxidase family. Classical plant (class III) peroxidase subfamily. Heme b is required as a cofactor. The cofactor is Ca(2+).

The protein resides in the secreted. The catalysed reaction is 2 a phenolic donor + H2O2 = 2 a phenolic radical donor + 2 H2O. Functionally, removal of H(2)O(2), oxidation of toxic reductants, biosynthesis and degradation of lignin, suberization, auxin catabolism, response to environmental stresses such as wounding, pathogen attack and oxidative stress. These functions might be dependent on each isozyme/isoform in each plant tissue. The polypeptide is Peroxidase 70 (PER70) (Arabidopsis thaliana (Mouse-ear cress)).